The sequence spans 527 residues: Catalase (527 aa).

Positions M1–Q22 are enriched in basic and acidic residues. Positions M1–L42 are disordered. A Blocked amino end (Ala); alternate modification is found at A2. A2 is subject to N-acetylalanine; alternate. S9 carries the phosphoserine modification. The residue at position 13 (K13) is an N6-succinyllysine. Active-site residues include H75 and N148. NADP(+) is bound by residues H194, F198, S201, R203, N213, and Y215. K221 carries the post-translational modification N6-succinyllysine. The residue at position 233 (K233) is an N6-acetyllysine. 3 residues coordinate NADP(+): K237, W303, and H305. Y358 is a binding site for heme. Phosphoserine occurs at positions 417 and 434. NADP(+) is bound by residues Q442, T445, and F446. 2 positions are modified to N6-acetyllysine; alternate: K449 and K480. Residues K449 and K480 each carry the N6-succinyllysine; alternate modification. At K499 the chain carries N6-acetyllysine. A Phosphothreonine modification is found at T511. S517 is modified (phosphoserine). The Microbody targeting signal; atypical motif lies at K524–L527.

The protein belongs to the catalase family. In terms of assembly, homotetramer. Interacts (via microbody targeting signal) with PEX5, monomeric form interacts with PEX5, leading to its translocation into peroxisomes. The cofactor is heme. NADP(+) is required as a cofactor.

It localises to the peroxisome matrix. The catalysed reaction is 2 H2O2 = O2 + 2 H2O. Its function is as follows. Catalyzes the degradation of hydrogen peroxide (H(2)O(2)) generated by peroxisomal oxidases to water and oxygen, thereby protecting cells from the toxic effects of hydrogen peroxide. Promotes growth of cells including T-cells, B-cells, myeloid leukemia cells, melanoma cells, mastocytoma cells and normal and transformed fibroblast cells. In Bos taurus (Bovine), this protein is Catalase (CAT).